A 258-amino-acid polypeptide reads, in one-letter code: Imidazole glycerol phosphate synthase subunit HisF (258 aa).

Active-site residues include D11 and D130.

The protein belongs to the HisA/HisF family. Heterodimer of HisH and HisF.

Its subcellular location is the cytoplasm. The catalysed reaction is 5-[(5-phospho-1-deoxy-D-ribulos-1-ylimino)methylamino]-1-(5-phospho-beta-D-ribosyl)imidazole-4-carboxamide + L-glutamine = D-erythro-1-(imidazol-4-yl)glycerol 3-phosphate + 5-amino-1-(5-phospho-beta-D-ribosyl)imidazole-4-carboxamide + L-glutamate + H(+). The protein operates within amino-acid biosynthesis; L-histidine biosynthesis; L-histidine from 5-phospho-alpha-D-ribose 1-diphosphate: step 5/9. Functionally, IGPS catalyzes the conversion of PRFAR and glutamine to IGP, AICAR and glutamate. The HisF subunit catalyzes the cyclization activity that produces IGP and AICAR from PRFAR using the ammonia provided by the HisH subunit. This is Imidazole glycerol phosphate synthase subunit HisF from Rhodospirillum centenum (strain ATCC 51521 / SW).